We begin with the raw amino-acid sequence, 90 residues long: Small ribosomal subunit protein uS17m (90 aa).

It belongs to the universal ribosomal protein uS17 family. As to quaternary structure, component of the mitochondrial small ribosomal subunit (mt-SSU). Mature yeast 74S mitochondrial ribosomes consist of a small (37S) and a large (54S) subunit. The 37S small subunit contains a 15S ribosomal RNA (15S mt-rRNA) and at least 32 different proteins. The 54S large subunit contains a 21S rRNA (21S mt-rRNA) and at least 45 different proteins.

It is found in the mitochondrion. Its function is as follows. Component of the mitochondrial ribosome (mitoribosome), a dedicated translation machinery responsible for the synthesis of mitochondrial genome-encoded proteins, including at least some of the essential transmembrane subunits of the mitochondrial respiratory chain. The mitoribosomes are attached to the mitochondrial inner membrane and translation products are cotranslationally integrated into the membrane. uS17m may have a meiosis-specific role as it accumulates during the middle stage of sporulation. The sequence is that of Small ribosomal subunit protein uS17m from Schizosaccharomyces pombe (strain 972 / ATCC 24843) (Fission yeast).